The primary structure comprises 438 residues: Probable 26S proteasome regulatory subunit rpn-6.1 (438 aa).

Basic and acidic residues predominate over residues 1 to 10 (MRETSSREDT). The disordered stretch occupies residues 1-30 (MRETSSREDTNNIGKAPEMSGGTIMDTMTS). A PCI domain is found at 239–408 (DFKTAFSYFY…GMLIVFEIAV (170 aa)).

This sequence belongs to the proteasome subunit S9 family. As to quaternary structure, component of the lid subcomplex of the 19S proteasome regulatory particle complex (also named PA700 complex). The 26S proteasome consists of a 20S proteasome core and two 19S regulatory subunits.

In terms of biological role, component of the lid subcomplex of the 26S proteasome, a multiprotein complex involved in the ATP-dependent degradation of ubiquitinated proteins. In the complex, rpn-6.1 is required for proteasome assembly. Plays a key role in increased proteasome activity in response to proteotoxic stress: induced by daf-16, promoting enhanced assembly of the 26S proteasome and higher proteasome activity, leading to extended lifespan. The chain is Probable 26S proteasome regulatory subunit rpn-6.1 from Caenorhabditis elegans.